A 231-amino-acid polypeptide reads, in one-letter code: DNA mismatch repair protein MutH (231 aa).

The protein belongs to the MutH family.

Its subcellular location is the cytoplasm. Functionally, sequence-specific endonuclease that cleaves unmethylated GATC sequences. It is involved in DNA mismatch repair. The protein is DNA mismatch repair protein MutH of Klebsiella pneumoniae subsp. pneumoniae (strain ATCC 700721 / MGH 78578).